The primary structure comprises 614 residues: Male-specific lethal 1 homolog (614 aa).

Disordered stretches follow at residues 1–127 and 147–217; these read MTMR…GCSP and KEPT…GASS. S66 and S126 each carry phosphoserine. Residues 158–169 are compositionally biased toward low complexity; that stretch reads GAASPAATASDP. Pro residues predominate over residues 170 to 184; sequence AGPPPLPLPGPPPLA. The span at 185 to 194 shows a compositional bias: low complexity; the sequence is PTATAGTLAA. Residue S205 is modified to Phosphoserine. The stretch at 213-282 forms a coiled coil; that stretch reads SGASSQAACL…KDNEKERHKL (70 aa). The interaction with MSL2 stretch occupies residues 223-237; it reads KQILLLQLDLIEQQQ. Basic and acidic residues-rich tracts occupy residues 272–281 and 294–304; these read KKDNEKERHK and TELSEKIKLEC. The segment at 272–420 is disordered; that stretch reads KKDNEKERHK…PKEKAFSSEI (149 aa). A Glycyl lysine isopeptide (Lys-Gly) (interchain with G-Cter in SUMO2) cross-link involves residue K301. The Nuclear localization signal signature appears at 317 to 346; that stretch reads PKPFSCGRSGKGHKRKSPFGSTERKTPVKK. K353 carries the post-translational modification N6-acetyllysine. Residues K365 and K378 each participate in a glycyl lysine isopeptide (Lys-Gly) (interchain with G-Cter in SUMO2) cross-link. Positions 376–392 are enriched in basic and acidic residues; it reads VCKRELRSQETPEKPRS. S393 is modified (phosphoserine). The span at 393–407 shows a compositional bias: polar residues; it reads SVDTPPRLSTPQKGP. Position 396 is a phosphothreonine (T396). S442 is subject to Phosphoserine. The 120-residue stretch at 472–591 folds into the PEHE domain; it reads VLAVPSWRDH…LTPQNFELPW (120 aa). Positions 496 to 514 are interaction with KAT8 HAT domain; sequence ENLDDSVFSKRHAKLELDE. The Bipartite nuclear localization signal signature appears at 505–519; that stretch reads KRHAKLELDEKRRKR. The segment at 550–591 is sufficient for interaction with MSL3 MRG domain; it reads EVTSFFPEPDDVESLMITPFLPVVAFGRPLPKLTPQNFELPW.

This sequence belongs to the msl-1 family. Component of a multisubunit histone acetyltransferase complex (MSL) at least composed of the KAT8/MOF/MYST1, MSL1/hampin, MSL2 and MSL3. Forms a MSL heterotetrameric core with MSL2. Interacts (via PEHE domain) with KAT8 (via HAT domain) and MSL3 (via MRG domain); both interactions are direct. Directly interacts with NUPR1. Interacts with TP53BP1; this interaction may be required for MSL1 DNA repair activity, but not for histone acetyltransferase activity. Interacts with TTC4, ECM2 and PIHD1. Post-translationally, sumoylated with SUMO1.

Its subcellular location is the nucleus. The protein localises to the nucleoplasm. It is found in the nucleus speckle. Non-catalytic component of the MSL histone acetyltransferase complex, a multiprotein complex that mediates the majority of histone H4 acetylation at 'Lys-16' (H4K16ac), an epigenetic mark that prevents chromatin compaction. The MSL complex is required for chromosome stability and genome integrity by maintaining homeostatic levels of H4K16ac. The MSL complex is also involved in gene dosage by promoting up-regulation of genes expressed by the X chromosome. X up-regulation is required to compensate for autosomal biallelic expression. The MSL complex also participates in gene dosage compensation by promoting expression of Tsix non-coding RNA. Within the MSL complex, acts as a scaffold to tether MSL3 and KAT8 together for enzymatic activity regulation. Greatly enhances MSL2 E3 ubiquitin ligase activity, promoting monoubiquitination of histone H2B at 'Lys-34' (H2BK34Ub). This modification in turn stimulates histone H3 methylation at 'Lys-4' (H3K4me) and 'Lys-79' (H3K79me) and leads to gene activation, including that of HOXA9 and MEIS1. This is Male-specific lethal 1 homolog from Homo sapiens (Human).